The chain runs to 156 residues: Small ribosomal subunit protein uS7 (156 aa).

This sequence belongs to the universal ribosomal protein uS7 family. In terms of assembly, part of the 30S ribosomal subunit. Contacts proteins S9 and S11.

Functionally, one of the primary rRNA binding proteins, it binds directly to 16S rRNA where it nucleates assembly of the head domain of the 30S subunit. Is located at the subunit interface close to the decoding center, probably blocks exit of the E-site tRNA. The protein is Small ribosomal subunit protein uS7 of Bacillus cereus (strain ZK / E33L).